Consider the following 482-residue polypeptide: Ras GTPase-activating protein-binding protein 2 (482 aa).

The 123-residue stretch at 11 to 133 (VGREFVRQYY…FYVHNDMFRY (123 aa)) folds into the NTF2 domain. The span at 140-158 (DSEPELDEESEDEVEEEQE) shows a compositional bias: acidic residues. Disordered stretches follow at residues 140–171 (DSEP…QENA) and 187–318 (EPLE…EQND). A phosphoserine mark is found at serine 141, serine 149, and serine 225. Residues 142–220 (EPELDEESED…PQVEEKNLEE (79 aa)) are acidic disordered region. Basic and acidic residues predominate over residues 191–225 (ESSHEPEPEPESETKTEELKPQVEEKNLEELEEKS). At threonine 227 the chain carries Phosphothreonine. Serine 235 is modified (phosphoserine). Polar residues predominate over residues 247 to 264 (ASVTSKNLPPSGTVSSSG). A Glycyl lysine isopeptide (Lys-Gly) (interchain with G-Cter in SUMO2) cross-link involves residue lysine 281. Over residues 290–300 (RVREQRPRERP) the composition is skewed to basic and acidic residues. Residues 331–409 (HQLFVGNLPH…VRLNVEEKKT (79 aa)) form the RRM domain. Residue lysine 392 is modified to N6-succinyllysine. The RG-rich region stretch occupies residues 404 to 476 (VEEKKTRAAR…GRGTGQMEGR (73 aa)). Over residues 408–432 (KTRAARERETRGGGDDRRDIRRNDR) the composition is skewed to basic and acidic residues. A disordered region spans residues 408-482 (KTRAARERET…MEGRFTGQRR (75 aa)). Over residues 433–445 (GPGGPRGIVGGGM) the composition is skewed to gly residues. The residue at position 457 (arginine 457) is an Omega-N-methylarginine. Serine 466 is modified (phosphoserine). Arginine 468 carries the post-translational modification Omega-N-methylarginine.

Forms homooligomers. Forms heterodimers with G3BP1. Interacts with NFKBIA (via N-terminus). Interacts (via NTF2 domain) with USP10; inhibiting stress granule formation. Interacts (via NTF2 domain) with CAPRIN1; promoting stress granule formation. Associates (via RG-rich region) with 40S ribosome subunits. Interacts with PABPC1. In terms of assembly, (Microbial infection) Interacts with non-structural protein 3 (via C-terminus) of Sindbis virus and Semliki forest virus; this interaction inhibits the formation of host stress granules on viral mRNAs and the nsp3-G3BP2 complexes bind viral RNAs and probably orchestrate the assembly of viral replication complexes. (Microbial infection) Cleaved by foot-and-mouth disease virus leader protease; this cleavage suppresses the formation of cytoplasmic stress granules.

It localises to the cytoplasm. The protein localises to the stress granule. Its activity is regulated as follows. Under physiological conditions, G3BP2 adopts a compact state that is stabilized by intramolecular interactions between the RG-rich and the acidic regions that inhibit phase separation. Upon stress, polysomes disassemble and mRNAs are released in an unfolded protein-free state. Binding of unfolded mRNA to G3BP2 outcompetes the intramolecular interactions and RNA-bound G3BP2 adopts an expanded conformation in which the RG-rich region becomes exposed to engage in protein-protein and protein-RNA interactions, allowing physical cross-linking of RNA molecules to form protein-RNA condensates, leading to liquid-liquid phase separation (LLPS). Scaffold protein that plays an essential role in cytoplasmic stress granule formation which acts as a platform for antiviral signaling. Plays an essential role in stress granule formation. Stress granules are membraneless compartments that store mRNAs and proteins, such as stalled translation pre-initiation complexes, in response to stress. Promotes formation of stress granules phase-separated membraneless compartment by undergoing liquid-liquid phase separation (LLPS) upon unfolded RNA-binding: functions as a molecular switch that triggers RNA-dependent LLPS in response to a rise in intracellular free RNA concentrations. The protein is Ras GTPase-activating protein-binding protein 2 of Homo sapiens (Human).